The following is a 222-amino-acid chain: Cytolethal distending toxin subunit A (222 aa).

Positions 1 to 15 (MKKFLPGLLLMGLVA) are cleaved as a signal peptide. A lipid anchor (N-palmitoyl cysteine) is attached at Cys-16. Cys-16 carries the S-diacylglycerol cysteine lipid modification. The disordered stretch occupies residues 22 to 44 (MSDYSQPESQSDLAPKSSTTQFQ). The segment at 90–101 (WALAKRNWLWAY) is mediates binding to target cells. One can recognise a Ricin B-type lectin domain in the interval 122-211 (HREYFRFVNQ…EPLRDQTWYL (90 aa)).

As to quaternary structure, heterotrimer of 3 subunits, CdtA, CdtB and CdtC. May form higher oligomers.

The protein resides in the cell outer membrane. Its function is as follows. CDTs are cytotoxins which induce host cell distension, growth arrest in G2/M phase, nucleus swelling, and chromatin fragmentation in HeLa cells. This Aggregatibacter actinomycetemcomitans (Actinobacillus actinomycetemcomitans) protein is Cytolethal distending toxin subunit A (cdtA).